Reading from the N-terminus, the 154-residue chain is MSATRAKKVKMATKSCPECDQQIPVACKSCPCGYIFISRKLLNAKHSEKSPPSTENKHEAKRRRTERVRREKINSTVNKDLENRKRSRSNSHSDHIRRGRGRPKSSSAKKHEEEREKQEKEIDIYANLSDEKAFVFSVALAEINRKIINQRLIL.

Residues 43–119 (NAKHSEKSPP…KHEEEREKQE (77 aa)) form a disordered region. Residues 68 to 84 (VRREKINSTVNKDLENR) are compositionally biased toward basic and acidic residues. S91 carries the post-translational modification Phosphoserine. Residues 104 to 132 (KSSSAKKHEEEREKQEKEIDIYANLSDEK) adopt a coiled-coil conformation. A compositionally biased stretch (basic and acidic residues) spans 109-119 (KKHEEEREKQE).

Belongs to the UPF0547 family.

The chain is UPF0547 protein C16orf87 homolog from Mus musculus (Mouse).